Consider the following 303-residue polypeptide: Pycsar effector protein BcPycTIR (303 aa).

22 to 138 (KLVGGDKGLA…RRMAKELSKR (117 aa)) contributes to the a nucleoside 3',5'-cyclic phosphate binding site. The TIR-like stretch occupies residues 154–273 (RVFVISSAEA…DMAGVTTIPY (120 aa)).

In terms of assembly, purified protein forms large 2-dimensional sheets when incubated with cUMP and shorter filaments in the presence of cCMP.

Its subcellular location is the cytoplasm. The catalysed reaction is NAD(+) + H2O = ADP-D-ribose + nicotinamide + H(+). With respect to regulation, activated by cyclic UMP (cUMP) and to a lesser extent by cCMP. Pycsar (pyrimidine cyclase system for antiphage resistance) provides immunity against bacteriophage. The pyrimidine cyclase (PycC) synthesizes cyclic nucleotides in response to infection; these serve as specific second messenger signals. The signals activate the adjacent effector, leading to bacterial cell death and abortive phage infection. A clade B Pycsar system. In terms of biological role, the effector protein of a two-gene Pycsar system. Upon activation by cyclic UMP (cUMP) degrades cellular NAD(+). Expression of this and adjacent uridylate cyclase BcPycC (AC A0A0J5ZXG5) probably confers resistance to bacteriophage. The genes are probably only expressed in response to bacteriophage infection. This protein probably only responds to cUMP (produced by its cognate NTP cyclase). The chain is Pycsar effector protein BcPycTIR from Burkholderia cepacia (Pseudomonas cepacia).